Reading from the N-terminus, the 435-residue chain is Glutamyl-tRNA reductase (435 aa).

Residues 49 to 52, Ser109, 114 to 116, and Gln120 contribute to the substrate site; these read TCNR and ETQ. The Nucleophile role is filled by Cys50. 189–194 provides a ligand contact to NADP(+); sequence GAGEMS.

Belongs to the glutamyl-tRNA reductase family. As to quaternary structure, homodimer.

The catalysed reaction is (S)-4-amino-5-oxopentanoate + tRNA(Glu) + NADP(+) = L-glutamyl-tRNA(Glu) + NADPH + H(+). The protein operates within porphyrin-containing compound metabolism; protoporphyrin-IX biosynthesis; 5-aminolevulinate from L-glutamyl-tRNA(Glu): step 1/2. Its function is as follows. Catalyzes the NADPH-dependent reduction of glutamyl-tRNA(Glu) to glutamate 1-semialdehyde (GSA). This chain is Glutamyl-tRNA reductase, found in Listeria monocytogenes serotype 4a (strain HCC23).